The sequence spans 475 residues: Legumain (475 aa).

The first 15 residues, 1 to 15 (MVMMLVMLSLHGTAA), serve as a signal peptide directing secretion. A propeptide spanning residues 16 to 35 (RLNRREWDSVIQLPTEPVDD) is cleaved from the precursor. Residue His-158 is part of the active site. Residue Cys-200 is the Nucleophile of the active site. Cys-233 and Cys-247 are joined by a disulfide. The N-linked (GlcNAc...) asparagine glycan is linked to Asn-300. Intrachain disulfides connect Cys-411–Cys-441 and Cys-423–Cys-458.

It belongs to the peptidase C13 family. Homodimer.

It carries out the reaction Hydrolysis of proteins and small molecule substrates at -Asn-|-Xaa- bonds.. Repressed by various protease inhibitors including p-chloromercuribenzene sulfonic acid (PCMBS), N-ethylmaleimide, kininogen, elastatinal, cystatin EW and leupeptin. Functionally, asparaginyl endopeptidase able to cleave almost all peptide bonds on the carboxyl side of Asn residues, except at the NH2 terminus or second position or with N-glycosylated Asn. Responsible for the maturation (circular permutation) of concanavalin A from its precursor, by performing both cleavage and cleavage-coupled transpeptidation to form conA. The polypeptide is Legumain (Canavalia ensiformis (Jack bean)).